The sequence spans 579 residues: Insulin-like growth factor 2 mRNA-binding protein 3 (579 aa).

RRM domains are found at residues 2-75 (NKLY…HSVP) and 81-156 (RKLQ…YIPD). Residues 160 to 192 (AQQNPLQQPRGRRGLGQRGSSRQGSPGSVSKQK) form a disordered region. The segment covering 177-187 (RGSSRQGSPGS) has biased composition (low complexity). Phosphoserine is present on serine 184. KH domains follow at residues 195 to 260 (DLPL…CKSI), 276 to 343 (EIPL…EEEI), and 405 to 470 (TETV…QGRI). Residues lysine 450 and lysine 475 each participate in a glycyl lysine isopeptide (Lys-Gly) (interchain with G-Cter in SUMO2) cross-link. One can recognise a KH 4 domain in the interval 487–553 (KLEAHIRVPS…YACQVAQRKI (67 aa)). A Phosphothreonine modification is found at threonine 528.

This sequence belongs to the RRM IMP/VICKZ family. In terms of assembly, can form homooligomers and heterooligomers with IGF2BP1 and IGF2BP3 in an RNA-dependent manner. Interacts with IGF2BP1. Interacts with ELAVL1, DHX9, HNRNPU, MATR3 and PABPC1. As to expression, expressed in fetal liver, fetal lung, fetal kidney, fetal thymus, fetal placenta, fetal follicles of ovary and gonocytes of testis, growing oocytes, spermatogonia and semen (at protein level). Expressed in cervix adenocarcinoma, in testicular, pancreatic and renal-cell carcinomas (at protein level). Expressed ubiquitously during fetal development at 8 and 14 weeks of gestation. Expressed in ovary, testis, brain, placenta, pancreatic cancer tissues and pancreatic cancer cell lines.

Its subcellular location is the nucleus. It is found in the cytoplasm. The protein localises to the P-body. The protein resides in the stress granule. Its function is as follows. RNA-binding factor that may recruit target transcripts to cytoplasmic protein-RNA complexes (mRNPs). This transcript 'caging' into mRNPs allows mRNA transport and transient storage. It also modulates the rate and location at which target transcripts encounter the translational apparatus and shields them from endonuclease attacks or microRNA-mediated degradation. Preferentially binds to N6-methyladenosine (m6A)-containing mRNAs and increases their stability. Binds to the 3'-UTR of CD44 mRNA and stabilizes it, hence promotes cell adhesion and invadopodia formation in cancer cells. Binds to beta-actin/ACTB and MYC transcripts. Increases MYC mRNA stability by binding to the coding region instability determinant (CRD) and binding is enhanced by m6A-modification of the CRD. Binds to the 5'-UTR of the insulin-like growth factor 2 (IGF2) mRNAs. In Homo sapiens (Human), this protein is Insulin-like growth factor 2 mRNA-binding protein 3 (IGF2BP3).